The primary structure comprises 332 residues: Melanocortin receptor 4 (332 aa).

At 1–43 (MNSTQPLGMHTSLHSWNRSAHGMPTNVSESLAKGYSDGGCYEQ) the chain is on the extracellular side. N-linked (GlcNAc...) asparagine glycosylation is found at Asn2, Asn17, and Asn26. 2 cysteine pairs are disulfide-bonded: Cys40/Cys279 and Cys271/Cys277. Residues 44–69 (LFVSPEVFVTLGVISLLENILVIVAI) traverse the membrane as a helical segment. Topologically, residues 70-81 (AKNKNLHSPMYF) are cytoplasmic. The chain crosses the membrane as a helical span at residues 82–106 (FICSLAVADMLVSVSNGSETIVITL). Positions 100, 122, and 126 each coordinate Ca(2+). Topologically, residues 107-123 (LNSTDTDAQSFTVDIDN) are extracellular. The helical transmembrane segment at 124–145 (VIDSVICSSLLASICSLLSIAV) threads the bilayer. The Cytoplasmic portion of the chain corresponds to 146–165 (DRYFTIFYALQYHNIMTVKR). A helical membrane pass occupies residues 166 to 186 (VAITISAIWAACTVSGVLFII). Residues 187–191 (YSDSS) lie on the Extracellular side of the membrane. A helical transmembrane segment spans residues 192 to 215 (AVIICLITVFFTMLALMASLYVHM). Topologically, residues 216-248 (FLMARLHIKRIAVLPGSGTIRQGANMKGAITLT) are cytoplasmic. Residues 249-271 (ILIGVFVVCWAPFFLHLIFYISC) traverse the membrane as a helical segment. The Extracellular segment spans residues 272–280 (PQNPYCVCF). A helical membrane pass occupies residues 281-304 (MSHFNLYLILIMCNSIIDPLIYAL). Topologically, residues 305–332 (RSQELRKTFKEIICCSPLGGLCDLSSRY) are cytoplasmic. The S-palmitoyl cysteine moiety is linked to residue Cys318.

Belongs to the G-protein coupled receptor 1 family. In terms of assembly, homodimer; disulfide-linked, also forms higher order oligomers. Interacts with GNAS. Interacts with ATRNL1. Interacts with MGRN1; this interaction competes with GNAS-binding and thus inhibits agonist-induced cAMP production. Interacts with MRAP and MRAP2; these associated factors increase ligand-sensitivity and generation of cAMP.

It localises to the cell membrane. Its function is as follows. Hormone receptor that acts as a key component of the leptin-melanocortin pathway at the intersection of homeostatic maintenance of energetic state. Plays a role in regulating food intake: activation by a stimulating hormone such as anorexigenic alpha-melanocyte stimulating hormone (alpha-MSH) inhibits appetite, whereas binding to a natural antagonist like Agouti-related protein/AGRP promotes appetite. G-protein-coupled receptor that activates conventional Galphas signaling leading to induction of anorexogenic signaling in the hypothalamus to result in negative energy balance. Regulates the firing activity of neurons from the hypothalamus by alpha-MSH and AGRP independently of Galphas signaling by ligand-induced coupling of closure of inwardly rectifying potassium channel KCNJ13. In intestinal epithelial cells, plays a role in the inhibition of hepatic glucose production via nesfatin-1/NUCB2 leading to increased cyclic adenosine monophosphate (cAMP) levels and glucagon-like peptide 1 (GLP-1) secretion in the intestinal epithelium. The protein is Melanocortin receptor 4 (MC4R) of Bos taurus (Bovine).